The primary structure comprises 105 residues: Large ribosomal subunit protein uL24 (105 aa).

This sequence belongs to the universal ribosomal protein uL24 family. In terms of assembly, part of the 50S ribosomal subunit.

In terms of biological role, one of two assembly initiator proteins, it binds directly to the 5'-end of the 23S rRNA, where it nucleates assembly of the 50S subunit. One of the proteins that surrounds the polypeptide exit tunnel on the outside of the subunit. The chain is Large ribosomal subunit protein uL24 from Aeromonas hydrophila subsp. hydrophila (strain ATCC 7966 / DSM 30187 / BCRC 13018 / CCUG 14551 / JCM 1027 / KCTC 2358 / NCIMB 9240 / NCTC 8049).